We begin with the raw amino-acid sequence, 552 residues long: uncharacterized protein (552 aa).

A run of 4 helical transmembrane segments spans residues 127–147 (AIML…ISLL), 160–180 (LIIV…YINI), 393–413 (LTKQ…LSAV), and 517–537 (VIDS…FICI).

The protein localises to the membrane. This is an uncharacterized protein from Saccharomyces cerevisiae (strain ATCC 204508 / S288c) (Baker's yeast).